The following is a 180-amino-acid chain: Large ribosomal subunit protein uL5 (180 aa).

Belongs to the universal ribosomal protein uL5 family. Part of the 50S ribosomal subunit; part of the 5S rRNA/L5/L18/L25 subcomplex. Contacts the 5S rRNA and the P site tRNA. Forms a bridge to the 30S subunit in the 70S ribosome.

Its function is as follows. This is one of the proteins that bind and probably mediate the attachment of the 5S RNA into the large ribosomal subunit, where it forms part of the central protuberance. In the 70S ribosome it contacts protein S13 of the 30S subunit (bridge B1b), connecting the 2 subunits; this bridge is implicated in subunit movement. Contacts the P site tRNA; the 5S rRNA and some of its associated proteins might help stabilize positioning of ribosome-bound tRNAs. The polypeptide is Large ribosomal subunit protein uL5 (Lactococcus lactis subsp. lactis (strain IL1403) (Streptococcus lactis)).